We begin with the raw amino-acid sequence, 150 residues long: Infection structure-specific protein 24 (150 aa).

Functionally, involved in the development of infection structures. The germ tube elongates across the leaf surface of the infected plant until it recognizes a stomate. Physical stimuli provided by the stomate induce differentiation of the germ tube to form a series of infection structures involved in host colonization. The sequence is that of Infection structure-specific protein 24 (INF24) from Uromyces appendiculatus (Rust fungus).